The chain runs to 518 residues: Ribonuclease Y (518 aa).

A helical membrane pass occupies residues 2–22 (GSIIISALLALVIGAVVGFFV). The 64-residue stretch at 208 to 271 (TVSVVNLPND…ETARIALDKL (64 aa)) folds into the KH domain. The region spanning 334-427 (VLKHSVEVAF…VAAADALSAA (94 aa)) is the HD domain.

It belongs to the RNase Y family.

The protein resides in the cell membrane. Endoribonuclease that initiates mRNA decay. This Geobacillus kaustophilus (strain HTA426) protein is Ribonuclease Y.